Reading from the N-terminus, the 329-residue chain is Minor capsid protein A1 (329 aa).

The protein resides in the virion. Functionally, minor capsid protein. The polypeptide is Minor capsid protein A1 (Escherichia coli (Bacteriophage Q-beta)).